Here is a 247-residue protein sequence, read N- to C-terminus: Cell division protein ZapD (247 aa).

The protein belongs to the ZapD family. In terms of assembly, interacts with FtsZ.

Its subcellular location is the cytoplasm. Its function is as follows. Cell division factor that enhances FtsZ-ring assembly. Directly interacts with FtsZ and promotes bundling of FtsZ protofilaments, with a reduction in FtsZ GTPase activity. This is Cell division protein ZapD from Citrobacter koseri (strain ATCC BAA-895 / CDC 4225-83 / SGSC4696).